The following is a 340-amino-acid chain: tRNA N6-adenosine threonylcarbamoyltransferase (340 aa).

The Fe cation site is built by H115 and H119. Substrate-binding positions include 138-142 (VVSGG), D171, G184, D188, and N278. Position 306 (D306) interacts with Fe cation.

This sequence belongs to the KAE1 / TsaD family. Fe(2+) serves as cofactor.

The protein localises to the cytoplasm. It catalyses the reaction L-threonylcarbamoyladenylate + adenosine(37) in tRNA = N(6)-L-threonylcarbamoyladenosine(37) in tRNA + AMP + H(+). Functionally, required for the formation of a threonylcarbamoyl group on adenosine at position 37 (t(6)A37) in tRNAs that read codons beginning with adenine. Is involved in the transfer of the threonylcarbamoyl moiety of threonylcarbamoyl-AMP (TC-AMP) to the N6 group of A37, together with TsaE and TsaB. TsaD likely plays a direct catalytic role in this reaction. This chain is tRNA N6-adenosine threonylcarbamoyltransferase, found in Clostridium botulinum (strain Hall / ATCC 3502 / NCTC 13319 / Type A).